Here is a 417-residue protein sequence, read N- to C-terminus: Snake venom metalloproteinase aculysin-1 (417 aa).

The N-terminal stretch at 1–20 is a signal peptide; it reads MIQVLLVTICLAAFPYQGSS. The propeptide occupies 21–189; it reads IMLESGKVND…KKPSWLNLTP (169 aa). The Peptidase M12B domain maps to 197-392; it reads TSVNLQLIVD…KKPKCIHKKS (196 aa). Cystine bridges form between cysteine 308-cysteine 387, cysteine 349-cysteine 371, and cysteine 351-cysteine 354. Histidine 333 contributes to the Zn(2+) binding site. Glutamate 334 is a catalytic residue. Histidine 337 and histidine 343 together coordinate Zn(2+). The propeptide occupies 393–417; the sequence is LKTDTVSTSVSGNEPLDDNVDGFHA. The tract at residues 398–417 is disordered; it reads VSTSVSGNEPLDDNVDGFHA. Residues 407–417 show a composition bias toward acidic residues; it reads PLDDNVDGFHA.

Belongs to the venom metalloproteinase (M12B) family. P-I subfamily. Monomer. It depends on Zn(2+) as a cofactor. As to expression, expressed by the venom gland.

The protein resides in the secreted. Functionally, this protein is an alkaline zinc metalloprotease from snake venom that possesses weak hemorrhagic activity. This is Snake venom metalloproteinase aculysin-1 from Deinagkistrodon acutus (Hundred-pace snake).